The chain runs to 248 residues: Triosephosphate isomerase (248 aa).

Substrate-binding residues include Asn11 and Lys13. His95 serves as the catalytic Electrophile. Glu165 functions as the Proton acceptor in the catalytic mechanism.

Belongs to the triosephosphate isomerase family. In terms of assembly, homodimer.

The protein localises to the cytoplasm. The catalysed reaction is dihydroxyacetone phosphate = methylglyoxal + phosphate. It catalyses the reaction D-glyceraldehyde 3-phosphate = dihydroxyacetone phosphate. It functions in the pathway carbohydrate degradation; glycolysis; D-glyceraldehyde 3-phosphate from glycerone phosphate: step 1/1. Its pathway is carbohydrate biosynthesis; gluconeogenesis. Functionally, triosephosphate isomerase is an extremely efficient metabolic enzyme that catalyzes the interconversion between dihydroxyacetone phosphate (DHAP) and D-glyceraldehyde-3-phosphate (G3P) in glycolysis and gluconeogenesis. Its function is as follows. It is also responsible for the non-negligible production of methylglyoxal a reactive cytotoxic side-product that modifies and can alter proteins, DNA and lipids. The chain is Triosephosphate isomerase (TPI1) from Gallus gallus (Chicken).